Here is a 293-residue protein sequence, read N- to C-terminus: MAAGGSGAESAPPTPSMSSLPLAALNVRVRHRLSLFLNVRTQVAADWTGLAEEMNFEYLEIRRLETHPDPTRSLLDDWQGRPGASVGRLLELLAKLGRDDVLVELGPSIEEDCRKYILKQQQEAAEKPLQVDSVDSSIPWMSGITIRDDPLGQMPEHFDAFICYCPSDIQFVQEMIRQLEQTNYRLKLCVSDRDVLPGTCVWSIASELIEKRCRRMVVVVSDDYLQSKECDFQTKFALSLSPGAHQKRLIPVKYKSMKKEFPSILRFITVCDYTNPCTKSWFWTRLARALSLP.

Residues 32–109 (RLSLFLNVRT…DVLVELGPSI (78 aa)) enclose the Death domain. Residues 110–152 (EEDCRKYILKQQQEAAEKPLQVDSVDSSIPWMSGITIRDDPLG) form an intermediate domain region. The 135-residue stretch at 156 to 290 (EHFDAFICYC…WFWTRLARAL (135 aa)) folds into the TIR domain. Residue Ser-241 is modified to Phosphoserine.

In terms of assembly, homodimer. Also forms heterodimers with TIRAP. Binds to TLR2, TLR4, IRAK1, IRAK2 and IRAK4 via their respective TIR domains. Interacts with IL18R1. Interacts with BMX, IL1RL1, IKBKE and IRF7. Interacts with LRRFIP1 and LRRFIP2; this interaction positively regulates Toll-like receptor (TLR) signaling in response to agonist. Interacts with FLII. LRRFIP1 and LRRFIP2 compete with FLII for MYD88-binding. Interacts with IRF1. Upon IL1B treatment, forms a complex with PELI1, IRAK1, IRAK4 and TRAF6; this complex recruits MAP3K7/TAK1, TAB1 and TAB2 to mediate NF-kappa-B activation. Direct binding of SMAD6 to PELI1 prevents the complex formation and hence negatively regulates IL1R-TLR signaling and eventually NF-kappa-B-mediated gene expression. May interact with PIK3AP1. Interacts (via TIR domain) with DHX9 (via H2A and OB-fold regions); this interaction is direct. Interacts with OTUD4 deubiquitinase; the interaction is direct. In terms of processing, ubiquitinated; undergoes 'Lys-63'-linked polyubiquitination. OTUD4 specifically hydrolyzes 'Lys-63'-linked polyubiquitinated MYD88. Deubiquitinated by USP3 that cleaves 'Lys-63'-linked ubiquitin chains leading to inhibition of MYD88-induced NF-kappa-B signaling. As to expression, expressed in esophagus, duodenum, jejenum, ileum, ileal Peyer patches, mesenteric lymph node, colon and spleen.

The protein localises to the cytoplasm. Its subcellular location is the nucleus. Functionally, adapter protein involved in the Toll-like receptor and IL-1 receptor signaling pathway in the innate immune response. Acts via IRAK1, IRAK2, IRF7 and TRAF6, leading to NF-kappa-B activation, cytokine secretion and the inflammatory response. Increases IL-8 transcription. Involved in IL-18-mediated signaling pathway. Activates IRF1 resulting in its rapid migration into the nucleus to mediate an efficient induction of IFN-beta, NOS2/INOS, and IL12A genes. Upon TLR8 activation by GU-rich single-stranded RNA (GU-rich RNA) derived from viruses, induces IL1B release through NLRP3 inflammasome activation. MyD88-mediated signaling in intestinal epithelial cells is crucial for maintenance of gut homeostasis and controls the expression of the antimicrobial lectin REG3G in the small intestine. This chain is Myeloid differentiation primary response protein MyD88 (MYD88), found in Sus scrofa (Pig).